A 115-amino-acid polypeptide reads, in one-letter code: Large ribosomal subunit protein uL22 (115 aa).

Belongs to the universal ribosomal protein uL22 family. In terms of assembly, part of the 50S ribosomal subunit.

In terms of biological role, this protein binds specifically to 23S rRNA; its binding is stimulated by other ribosomal proteins, e.g. L4, L17, and L20. It is important during the early stages of 50S assembly. It makes multiple contacts with different domains of the 23S rRNA in the assembled 50S subunit and ribosome. The globular domain of the protein is located near the polypeptide exit tunnel on the outside of the subunit, while an extended beta-hairpin is found that lines the wall of the exit tunnel in the center of the 70S ribosome. This is Large ribosomal subunit protein uL22 from Thioalkalivibrio sulfidiphilus (strain HL-EbGR7).